A 434-amino-acid polypeptide reads, in one-letter code: Putative polysaccharide biosynthesis protein with aminopeptidase-like domain (434 aa).

2 aminopeptidase-like regions span residues Met-1–Val-55 and Ser-57–Asn-355. Positions Lys-56 to Gly-164 are insert. 3 residues coordinate Zn(2+): His-189, Asp-195, and His-324. The permutated winged helix-turn-helix stretch occupies residues Arg-356–Val-434.

The protein belongs to the UPF0770 family. Homotrimer. Requires Zn(2+) as cofactor.

Its function is as follows. The genomic context suggests a role in the biosynthesis of modified polysaccharides; this association with genes involved in carbohydrate metabolism is observed in several phylogenetically distinct taxa. Is not expected to have peptidase activity despite low similarity to aminopeptidases. The sequence is that of Putative polysaccharide biosynthesis protein with aminopeptidase-like domain from Clostridium acetobutylicum (strain ATCC 824 / DSM 792 / JCM 1419 / IAM 19013 / LMG 5710 / NBRC 13948 / NRRL B-527 / VKM B-1787 / 2291 / W).